The primary structure comprises 115 residues: U3-lycotoxin-Ls1a (115 aa).

The N-terminal stretch at 1–20 (MKFVLLFGVFLVTLFSYSSA) is a signal peptide. Residues 21 to 44 (EMLDDFDQADEDELLSLIEKEEAR) constitute a propeptide that is removed on maturation. Disulfide bonds link Cys-48/Cys-63, Cys-55/Cys-72, Cys-62/Cys-87, and Cys-74/Cys-85.

It belongs to the neurotoxin 19 (CSTX) family. 01 subfamily. In terms of tissue distribution, expressed by the venom gland.

The protein localises to the secreted. This chain is U3-lycotoxin-Ls1a, found in Lycosa singoriensis (Wolf spider).